We begin with the raw amino-acid sequence, 600 residues long: Aspartate--tRNA(Asp/Asn) ligase (600 aa).

Glu183 is an L-aspartate binding site. Residues 207–210 (QLFK) are aspartate. Arg229 is an L-aspartate binding site. ATP is bound by residues 229 to 231 (RDE) and Gln238. L-aspartate is bound at residue His456. Glu490 serves as a coordination point for ATP. Arg497 contributes to the L-aspartate binding site. Residue 542–545 (GLDR) coordinates ATP.

Belongs to the class-II aminoacyl-tRNA synthetase family. Type 1 subfamily. Homodimer.

It localises to the cytoplasm. It catalyses the reaction tRNA(Asx) + L-aspartate + ATP = L-aspartyl-tRNA(Asx) + AMP + diphosphate. In terms of biological role, aspartyl-tRNA synthetase with relaxed tRNA specificity since it is able to aspartylate not only its cognate tRNA(Asp) but also tRNA(Asn). Reaction proceeds in two steps: L-aspartate is first activated by ATP to form Asp-AMP and then transferred to the acceptor end of tRNA(Asp/Asn). In Moorella thermoacetica (strain ATCC 39073 / JCM 9320), this protein is Aspartate--tRNA(Asp/Asn) ligase.